We begin with the raw amino-acid sequence, 404 residues long: Imidazolonepropionase (404 aa).

Residues His73 and His75 each coordinate Fe(3+). His73 and His75 together coordinate Zn(2+). Positions 82, 145, and 178 each coordinate 4-imidazolone-5-propanoate. Tyr145 is a binding site for N-formimidoyl-L-glutamate. A Fe(3+)-binding site is contributed by His243. His243 is a Zn(2+) binding site. Gln246 is a 4-imidazolone-5-propanoate binding site. Position 318 (Asp318) interacts with Fe(3+). Asp318 is a Zn(2+) binding site. Residues Asn320 and Gly322 each coordinate N-formimidoyl-L-glutamate. A 4-imidazolone-5-propanoate-binding site is contributed by Ser323.

This sequence belongs to the metallo-dependent hydrolases superfamily. HutI family. Zn(2+) serves as cofactor. It depends on Fe(3+) as a cofactor.

It is found in the cytoplasm. It catalyses the reaction 4-imidazolone-5-propanoate + H2O = N-formimidoyl-L-glutamate. It functions in the pathway amino-acid degradation; L-histidine degradation into L-glutamate; N-formimidoyl-L-glutamate from L-histidine: step 3/3. Functionally, catalyzes the hydrolytic cleavage of the carbon-nitrogen bond in imidazolone-5-propanoate to yield N-formimidoyl-L-glutamate. It is the third step in the universal histidine degradation pathway. This chain is Imidazolonepropionase, found in Bradyrhizobium diazoefficiens (strain JCM 10833 / BCRC 13528 / IAM 13628 / NBRC 14792 / USDA 110).